Consider the following 172-residue polypeptide: Shikimate kinase (172 aa).

An ATP-binding site is contributed by 11–16 (ASGKTE). Thr-15 serves as a coordination point for Mg(2+). Asp-33, Arg-57, and Gly-80 together coordinate substrate. Arg-120 provides a ligand contact to ATP. Arg-142 contacts substrate.

The protein belongs to the shikimate kinase family. As to quaternary structure, monomer. Requires Mg(2+) as cofactor.

It is found in the cytoplasm. It carries out the reaction shikimate + ATP = 3-phosphoshikimate + ADP + H(+). Its pathway is metabolic intermediate biosynthesis; chorismate biosynthesis; chorismate from D-erythrose 4-phosphate and phosphoenolpyruvate: step 5/7. Functionally, catalyzes the specific phosphorylation of the 3-hydroxyl group of shikimic acid using ATP as a cosubstrate. In Flavobacterium psychrophilum (strain ATCC 49511 / DSM 21280 / CIP 103535 / JIP02/86), this protein is Shikimate kinase.